Consider the following 317-residue polypeptide: Transaldolase (317 aa).

Lys-131 functions as the Schiff-base intermediate with substrate in the catalytic mechanism.

This sequence belongs to the transaldolase family. Type 1 subfamily. In terms of assembly, homodimer.

The protein resides in the cytoplasm. It catalyses the reaction D-sedoheptulose 7-phosphate + D-glyceraldehyde 3-phosphate = D-erythrose 4-phosphate + beta-D-fructose 6-phosphate. The protein operates within carbohydrate degradation; pentose phosphate pathway; D-glyceraldehyde 3-phosphate and beta-D-fructose 6-phosphate from D-ribose 5-phosphate and D-xylulose 5-phosphate (non-oxidative stage): step 2/3. Functionally, transaldolase is important for the balance of metabolites in the pentose-phosphate pathway. This chain is Transaldolase, found in Baumannia cicadellinicola subsp. Homalodisca coagulata.